The following is a 742-amino-acid chain: Probable serine/threonine-protein kinase PkwA (742 aa).

Positions 16–266 (YRLVSRLGAG…TAELLAQLST (251 aa)) constitute a Protein kinase domain. Residues 22 to 30 (LGAGGMGQV) and Lys-44 contribute to the ATP site. Catalysis depends on Asp-138, which acts as the Proton acceptor. Positions 266–394 (TDHTGDDWPP…PWSPPRVQPP (129 aa)) are disordered. Residues 301-318 (EPPPPSHGPPRPSEPLPD) show a composition bias toward pro residues. Over residues 343 to 356 (LEEKPIQVIHEPER) the composition is skewed to basic and acidic residues. Residues 377 to 392 (PRPAAPQPPWSPPRVQ) show a composition bias toward pro residues. 7 WD repeats span residues 455–496 (ILTT…ELHT), 497–538 (LEGH…ERAV), 539–580 (FEGH…EHAV), 581–621 (LKGH…KERD), 622–663 (VLQA…ALHT), 664–705 (FEGH…EHTT), and 706–742 (LEGH…IATE).

The protein belongs to the protein kinase superfamily. Ser/Thr protein kinase family.

It carries out the reaction L-seryl-[protein] + ATP = O-phospho-L-seryl-[protein] + ADP + H(+). It catalyses the reaction L-threonyl-[protein] + ATP = O-phospho-L-threonyl-[protein] + ADP + H(+). May play a regulatory role during the complex growth cycle and in secondary metabolite production. This is Probable serine/threonine-protein kinase PkwA (pkwA) from Thermomonospora curvata.